We begin with the raw amino-acid sequence, 460 residues long: Adenylosuccinate lyase (460 aa).

Residues 15–16 (RY), 88–90 (NHD), and 120–121 (TS) each bind N(6)-(1,2-dicarboxyethyl)-AMP. Catalysis depends on histidine 169, which acts as the Proton donor/acceptor. Glutamine 245 is a N(6)-(1,2-dicarboxyethyl)-AMP binding site. Residue serine 293 is the Proton donor/acceptor of the active site. Residues serine 294, 299-301 (KIN), asparagine 307, arginine 333, and 338-342 (STVLR) each bind N(6)-(1,2-dicarboxyethyl)-AMP.

This sequence belongs to the lyase 1 family. Adenylosuccinate lyase subfamily. In terms of assembly, homotetramer. Residues from neighboring subunits contribute catalytic and substrate-binding residues to each active site.

The enzyme catalyses N(6)-(1,2-dicarboxyethyl)-AMP = fumarate + AMP. The catalysed reaction is (2S)-2-[5-amino-1-(5-phospho-beta-D-ribosyl)imidazole-4-carboxamido]succinate = 5-amino-1-(5-phospho-beta-D-ribosyl)imidazole-4-carboxamide + fumarate. It participates in purine metabolism; AMP biosynthesis via de novo pathway; AMP from IMP: step 2/2. It functions in the pathway purine metabolism; IMP biosynthesis via de novo pathway; 5-amino-1-(5-phospho-D-ribosyl)imidazole-4-carboxamide from 5-amino-1-(5-phospho-D-ribosyl)imidazole-4-carboxylate: step 2/2. Functionally, catalyzes two reactions in de novo purine nucleotide biosynthesis. Catalyzes the breakdown of 5-aminoimidazole- (N-succinylocarboxamide) ribotide (SAICAR or 2-[5-amino-1-(5-phospho-beta-D-ribosyl)imidazole-4-carboxamido]succinate) to 5-aminoimidazole-4-carboxamide ribotide (AICAR or 5-amino-1-(5-phospho-beta-D-ribosyl)imidazole-4-carboxamide) and fumarate, and of adenylosuccinate (ADS or N(6)-(1,2-dicarboxyethyl)-AMP) to adenosine monophosphate (AMP) and fumarate. The chain is Adenylosuccinate lyase (purB) from Buchnera aphidicola subsp. Baizongia pistaciae (strain Bp).